We begin with the raw amino-acid sequence, 592 residues long: 1,4-alpha-glucan branching enzyme GlgB 2 (592 aa).

The active-site Nucleophile is D274. The active-site Proton donor is E327.

It belongs to the glycosyl hydrolase 13 family. GlgB subfamily. In terms of assembly, monomer.

The catalysed reaction is Transfers a segment of a (1-&gt;4)-alpha-D-glucan chain to a primary hydroxy group in a similar glucan chain.. The protein operates within glycan biosynthesis; glycogen biosynthesis. Catalyzes the formation of the alpha-1,6-glucosidic linkages in glycogen by scission of a 1,4-alpha-linked oligosaccharide from growing alpha-1,4-glucan chains and the subsequent attachment of the oligosaccharide to the alpha-1,6 position. This Streptomyces avermitilis (strain ATCC 31267 / DSM 46492 / JCM 5070 / NBRC 14893 / NCIMB 12804 / NRRL 8165 / MA-4680) protein is 1,4-alpha-glucan branching enzyme GlgB 2.